The sequence spans 238 residues: Fish-egg lectin (238 aa).

5 repeat units span residues 1-34 (LDCT…VLID), 35-68 (NVFT…KYQS), 69-106 (GGFV…MDAN), 107-156 (NKWP…CSGS), and 157-199 (GSFI…KPDG). Residues 1-199 (LDCTVIDGNL…TGVTRSKPDG (199 aa)) form a 5 X approximate tandem repeats region. Cystine bridges form between cysteine 3/cysteine 234, cysteine 100/cysteine 153, cysteine 128/cysteine 133, and cysteine 208/cysteine 226. Asparagine 27 carries N-linked (GlcNAc...) asparagine glycosylation.

It belongs to the tectonin family. In terms of tissue distribution, expressed in the eggs.

It localises to the secreted. Functionally, lipopolysaccharide-binding protein with a very low agglutinating activity for human A-type erythrocytes and interacts with both Gram-positive and Gram-negative bacteria. The protein is Fish-egg lectin of Cyprinus carpio (Common carp).